The chain runs to 451 residues: 2,4-dinitrotoluene dioxygenase system, large oxygenase component (451 aa).

One can recognise a Rieske domain in the interval 42-126; that stretch reads WLFLTHDSLI…LQSVPFEKEL (85 aa). [2Fe-2S] cluster is bound by residues C84, H86, C104, and H107. Residues H211, H216, and D365 each coordinate Fe cation.

The protein belongs to the bacterial ring-hydroxylating dioxygenase alpha subunit family. The 2,4-dinitrotoluene dioxygenase (DNTDO) multicomponent enzyme system is composed of an electron transfer component and a dioxygenase component (iron sulfur protein (ISP)). The electron transfer component is composed of a ferredoxin reductase (DntAa) and a ferredoxin (DntAb), and the dioxygenase component is formed of a large alpha subunit (DntAc) and a small beta subunit (DntAd). [2Fe-2S] cluster serves as cofactor. Requires Fe(2+) as cofactor.

It carries out the reaction 2,4-dinitrotoluene + NADH + O2 = 4-methyl-5-nitrocatechol + nitrite + NAD(+). Component of the 2,4-dinitrotoluene dioxygenase (DNTDO) multicomponent enzyme system which catalyzes the incorporation of both atoms of molecular oxygen into 2,4-dinitrotoluene (DNT) to form 4-methyl-5-nitrocatechol (MNC) and nitrite. The alpha subunit has a catalytic role in the holoenzyme. Also able to convert naphthalene to cis-(1R,2S)-dihydroxy-1,2-dihydronaphthalene. This chain is 2,4-dinitrotoluene dioxygenase system, large oxygenase component, found in Burkholderia sp. (strain RASC).